Consider the following 489-residue polypeptide: Aerolysin (489 aa).

Positions methionine 1 to glycine 24 are cleaved as a signal peptide. 2 disulfide bridges follow: cysteine 44-cysteine 100 and cysteine 184-cysteine 189. Residues tryptophan 70–tyrosine 86 form an interaction with host N-linked glycan region. Positions tyrosine 257–tryptophan 289 are part of the transmembrane beta-barrel after proteolytic activation of the toxin and insertion into the host membrane. The interval arginine 347–histidine 356 is interaction with glycans from host GPI-anchor. Positions threonine 445–glutamine 489 are excised as a propeptide.

This sequence belongs to the aerolysin family. In terms of assembly, homodimer in solution; homoheptamer in the host membrane. After binding to GPI-anchored proteins in target membranes and proteolytic removal of the C-terminal propeptide, the protein assembles into a heptameric pre-pore complex. A further conformation change leads to insertion into the host membrane. Proteolytic cleavage and subsequent release of the propeptide trigger a major conformation change, leading to the formation of a heptameric pre-pore that then inserts into the host membrane.

The protein localises to the secreted. It localises to the host cell membrane. Secreted, cytolytic toxin that forms pores in host membranes after proteolytic removal of a C-terminal propeptide, leading to destruction of the membrane permeability barrier and cell death. The pores are formed by transmembrane beta-strands and are approximately 3 nm in diameter. In Aeromonas salmonicida, this protein is Aerolysin (ash3).